Consider the following 332-residue polypeptide: Geranylgeranyl pyrophosphate synthase dpasD (332 aa).

Isopentenyl diphosphate contacts are provided by K55, R58, and H87. The Mg(2+) site is built by D94 and D98. Residue R103 coordinates dimethylallyl diphosphate. R104 serves as a coordination point for isopentenyl diphosphate. Dimethylallyl diphosphate is bound by residues K181, T182, and Q215. Mg(2+) is bound at residue D218. Dimethylallyl diphosphate is bound by residues N222, K232, and K242.

This sequence belongs to the FPP/GGPP synthase family. Mg(2+) is required as a cofactor.

The enzyme catalyses isopentenyl diphosphate + dimethylallyl diphosphate = (2E)-geranyl diphosphate + diphosphate. The catalysed reaction is isopentenyl diphosphate + (2E)-geranyl diphosphate = (2E,6E)-farnesyl diphosphate + diphosphate. It catalyses the reaction isopentenyl diphosphate + (2E,6E)-farnesyl diphosphate = (2E,6E,10E)-geranylgeranyl diphosphate + diphosphate. It participates in secondary metabolite biosynthesis; terpenoid biosynthesis. Its function is as follows. Geranylgeranyl pyrophosphate synthase; part of the gene cluster that mediates the biosynthesis of the diterpenoid pyrones subglutinols A and B. The first step of the pathway is the synthesis of the alpha-pyrone moiety by the polyketide synthase dpasA via condensation of one acetyl-CoA starter unit with 3 malonyl-CoA units and 2 methylations. The alpha-pyrone is then combined with geranylgeranyl pyrophosphate (GGPP) formed by the GGPP synthase dpasD through the action of the prenyltransferase dpasC to yield a linear alpha-pyrone diterpenoid. Subsequent steps in the diterpenoid pyrone biosynthetic pathway involve the decalin core formation, which is initiated by the epoxidation of the C10-C11 olefin by the FAD-dependent oxidoreductase dpasE, and is followed by a cyclization cascade catalyzed by the terpene cyclase dpasB. The FAD-linked oxidoreductase dpasF is then involved in tetrahydrofuran (THF) ring formation at the C5 unit to complete the formation of subglutinols A and B. DpasF also possesses an additional catalytic ability of multi-step oxidations to generate a new DDP analog with an enone system at the C5 named FDDP A. In Apiospora sacchari (Arthrinium sacchari), this protein is Geranylgeranyl pyrophosphate synthase dpasD.